The following is a 285-amino-acid chain: UPF0354 protein SH1179 (285 aa).

This sequence belongs to the UPF0354 family.

This is UPF0354 protein SH1179 from Staphylococcus haemolyticus (strain JCSC1435).